A 480-amino-acid chain; its full sequence is 3,6-anhydro-alpha-L-galactose dehydrogenase (480 aa).

Residues 149–150 (WN), 173–176 (KPTS), and 226–227 (GS) contribute to the NADP(+) site. Glutamate 248 functions as the Proton acceptor in the catalytic mechanism. Leucine 249 provides a ligand contact to NADP(+). The active-site Nucleophile is cysteine 282. Glutamate 383 contributes to the NADP(+) binding site.

This sequence belongs to the aldehyde dehydrogenase family.

The enzyme catalyses 3,6-anhydro-alpha-L-galactopyranose + NADP(+) + H2O = 3,6-anhydro-L-galactonate + NADPH + 2 H(+). It carries out the reaction 3,6-anhydro-alpha-L-galactopyranose + NAD(+) + H2O = 3,6-anhydro-L-galactonate + NADH + 2 H(+). Involved in the degradation of 3,6-anhydro-L-galactose, which is the major monomeric sugar of red macroalgae. Catalyzes the oxidation of 3,6-anhydro-L-galactose (AHG) to form 3,6-anhydrogalactonate (AHGA). In Vibrio sp. (strain EJY3), this protein is 3,6-anhydro-alpha-L-galactose dehydrogenase.